We begin with the raw amino-acid sequence, 597 residues long: Probable E3 ubiquitin-protein ligase ARI1 (597 aa).

A TRIAD supradomain region spans residues 119-333 (SQMSCDVCME…IAGHSCGRYQ (215 aa)). 18 residues coordinate Zn(2+): Cys123, Cys126, Cys140, His142, Cys145, Cys148, Cys167, Cys172, Cys214, Cys220, Cys236, Cys238, Cys243, Cys246, His251, Cys256, Cys283, and Cys286. The RING-type 1 zinc-finger motif lies at 123–172 (CDVCMEDLPGDHMTRMDCGHCFCNNCWTEHFTVQINEGQSKRIRCMAHQC). Residues 194 to 256 (AKFDRYLLES…LCQAHSPCSC (63 aa)) form an IBR-type zinc finger. The segment at 283 to 311 (CPKCYKPVEKNGGCNLVRCICGQCFCWLC) adopts an RING-type 2; atypical zinc-finger fold. Cys296 is an active-site residue. Residues Cys301, Cys303, Cys308, Cys311, His319, and Cys329 each contribute to the Zn(2+) site. Residues 536 to 575 (FQPLDSGTSGVTSRPEQASGSRSSEDTICSSSQKRPKKEG) are disordered. Residues 540–568 (DSGTSGVTSRPEQASGSRSSEDTICSSSQ) show a composition bias toward polar residues.

Belongs to the RBR family. Ariadne subfamily. Zn(2+) serves as cofactor. As to expression, ubiquitous.

It carries out the reaction [E2 ubiquitin-conjugating enzyme]-S-ubiquitinyl-L-cysteine + [acceptor protein]-L-lysine = [E2 ubiquitin-conjugating enzyme]-L-cysteine + [acceptor protein]-N(6)-ubiquitinyl-L-lysine.. The protein operates within protein modification; protein ubiquitination. Might act as an E3 ubiquitin-protein ligase, or as part of E3 complex, which accepts ubiquitin from specific E2 ubiquitin-conjugating enzymes and then transfers it to substrates. The protein is Probable E3 ubiquitin-protein ligase ARI1 (ARI1) of Arabidopsis thaliana (Mouse-ear cress).